A 426-amino-acid chain; its full sequence is Glutamate-1-semialdehyde 2,1-aminomutase (426 aa).

N6-(pyridoxal phosphate)lysine is present on lysine 265.

Belongs to the class-III pyridoxal-phosphate-dependent aminotransferase family. HemL subfamily. As to quaternary structure, homodimer. Requires pyridoxal 5'-phosphate as cofactor.

The protein resides in the cytoplasm. It carries out the reaction (S)-4-amino-5-oxopentanoate = 5-aminolevulinate. It participates in porphyrin-containing compound metabolism; protoporphyrin-IX biosynthesis; 5-aminolevulinate from L-glutamyl-tRNA(Glu): step 2/2. The chain is Glutamate-1-semialdehyde 2,1-aminomutase from Marinobacter nauticus (strain ATCC 700491 / DSM 11845 / VT8) (Marinobacter aquaeolei).